We begin with the raw amino-acid sequence, 165 residues long: Nucleotide-binding protein TGRD_519 (165 aa).

Belongs to the YajQ family.

Functionally, nucleotide-binding protein. The chain is Nucleotide-binding protein TGRD_519 from Endomicrobium trichonymphae.